The following is a 222-amino-acid chain: UPF0502 protein Shewmr7_1629 (222 aa).

Belongs to the UPF0502 family.

The sequence is that of UPF0502 protein Shewmr7_1629 from Shewanella sp. (strain MR-7).